Here is a 509-residue protein sequence, read N- to C-terminus: ATP synthase subunit alpha (509 aa).

169–176 (GDRQTGKT) provides a ligand contact to ATP.

This sequence belongs to the ATPase alpha/beta chains family. In terms of assembly, F-type ATPases have 2 components, CF(1) - the catalytic core - and CF(0) - the membrane proton channel. CF(1) has five subunits: alpha(3), beta(3), gamma(1), delta(1), epsilon(1). CF(0) has three main subunits: a(1), b(2) and c(9-12). The alpha and beta chains form an alternating ring which encloses part of the gamma chain. CF(1) is attached to CF(0) by a central stalk formed by the gamma and epsilon chains, while a peripheral stalk is formed by the delta and b chains.

It is found in the cell inner membrane. It catalyses the reaction ATP + H2O + 4 H(+)(in) = ADP + phosphate + 5 H(+)(out). In terms of biological role, produces ATP from ADP in the presence of a proton gradient across the membrane. The alpha chain is a regulatory subunit. The protein is ATP synthase subunit alpha of Brucella melitensis biotype 1 (strain ATCC 23456 / CCUG 17765 / NCTC 10094 / 16M).